Reading from the N-terminus, the 125-residue chain is Phosphoribosyl-AMP cyclohydrolase (125 aa).

Aspartate 74 lines the Mg(2+) pocket. Cysteine 75 is a Zn(2+) binding site. 2 residues coordinate Mg(2+): aspartate 76 and aspartate 78. Residues cysteine 92 and cysteine 99 each contribute to the Zn(2+) site.

This sequence belongs to the PRA-CH family. In terms of assembly, homodimer. Mg(2+) is required as a cofactor. It depends on Zn(2+) as a cofactor.

It localises to the cytoplasm. It catalyses the reaction 1-(5-phospho-beta-D-ribosyl)-5'-AMP + H2O = 1-(5-phospho-beta-D-ribosyl)-5-[(5-phospho-beta-D-ribosylamino)methylideneamino]imidazole-4-carboxamide. The protein operates within amino-acid biosynthesis; L-histidine biosynthesis; L-histidine from 5-phospho-alpha-D-ribose 1-diphosphate: step 3/9. Functionally, catalyzes the hydrolysis of the adenine ring of phosphoribosyl-AMP. This Citrifermentans bemidjiense (strain ATCC BAA-1014 / DSM 16622 / JCM 12645 / Bem) (Geobacter bemidjiensis) protein is Phosphoribosyl-AMP cyclohydrolase.